The sequence spans 167 residues: Small ribosomal subunit protein uS5 (167 aa).

The 64-residue stretch at 12-75 folds into the S5 DRBM domain; the sequence is LQEKLIAVNR…EKARRNMVTV (64 aa).

The protein belongs to the universal ribosomal protein uS5 family. In terms of assembly, part of the 30S ribosomal subunit. Contacts proteins S4 and S8.

In terms of biological role, with S4 and S12 plays an important role in translational accuracy. Functionally, located at the back of the 30S subunit body where it stabilizes the conformation of the head with respect to the body. This is Small ribosomal subunit protein uS5 from Shewanella sp. (strain W3-18-1).